We begin with the raw amino-acid sequence, 255 residues long: 5-oxoprolinase subunit A (255 aa).

The protein belongs to the LamB/PxpA family. Forms a complex composed of PxpA, PxpB and PxpC.

It catalyses the reaction 5-oxo-L-proline + ATP + 2 H2O = L-glutamate + ADP + phosphate + H(+). Functionally, catalyzes the cleavage of 5-oxoproline to form L-glutamate coupled to the hydrolysis of ATP to ADP and inorganic phosphate. The chain is 5-oxoprolinase subunit A from Pyrococcus horikoshii (strain ATCC 700860 / DSM 12428 / JCM 9974 / NBRC 100139 / OT-3).